Reading from the N-terminus, the 409-residue chain is LL-diaminopimelate aminotransferase (409 aa).

The substrate site is built by Y15 and G42. Pyridoxal 5'-phosphate-binding positions include Y72, 108 to 109 (SK), Y132, N187, Y218, and 246 to 248 (SFS). Residues K109, Y132, and N187 each contribute to the substrate site. K249 is modified (N6-(pyridoxal phosphate)lysine). Residues R257 and N292 each coordinate pyridoxal 5'-phosphate. Substrate-binding residues include N292 and R388.

This sequence belongs to the class-I pyridoxal-phosphate-dependent aminotransferase family. LL-diaminopimelate aminotransferase subfamily. In terms of assembly, homodimer. Pyridoxal 5'-phosphate is required as a cofactor.

It carries out the reaction (2S,6S)-2,6-diaminopimelate + 2-oxoglutarate = (S)-2,3,4,5-tetrahydrodipicolinate + L-glutamate + H2O + H(+). It functions in the pathway amino-acid biosynthesis; L-lysine biosynthesis via DAP pathway; LL-2,6-diaminopimelate from (S)-tetrahydrodipicolinate (aminotransferase route): step 1/1. Involved in the synthesis of meso-diaminopimelate (m-DAP or DL-DAP), required for both lysine and peptidoglycan biosynthesis. Catalyzes the direct conversion of tetrahydrodipicolinate to LL-diaminopimelate. In Heliobacterium modesticaldum (strain ATCC 51547 / Ice1), this protein is LL-diaminopimelate aminotransferase.